The primary structure comprises 246 residues: High mobility group protein 1 (246 aa).

The segment at residues 106–179 is a DNA-binding region (HMG box); sequence PKKPLTVFFA…NYQREKSKYL (74 aa). A disordered region spans residues 179 to 246; the sequence is LEAKKNGTLP…KKKDKSNSSI (68 aa). Positions 214-227 are enriched in basic and acidic residues; sequence PVEKRPHDDDGSSE. The span at 228–238 shows a compositional bias: basic residues; sequence KKKKKKKKDKK.

As to quaternary structure, interacts with FPR1. Interacts with an unidentified DNA helicase. Associates with rDNA.

It is found in the nucleus. The protein localises to the nucleolus. Functionally, DNA-binding protein that is probably part of the rDNA transcription apparatus. Acts synergetically with the RPA49 subunit of RNA polymerase I during rDNA transcription. May participate in mutagenesis control. In Saccharomyces cerevisiae (strain ATCC 204508 / S288c) (Baker's yeast), this protein is High mobility group protein 1 (HMO1).